Here is a 250-residue protein sequence, read N- to C-terminus: Pyrroloquinoline-quinone synthase (250 aa).

It belongs to the PqqC family.

The catalysed reaction is 6-(2-amino-2-carboxyethyl)-7,8-dioxo-1,2,3,4,7,8-hexahydroquinoline-2,4-dicarboxylate + 3 O2 = pyrroloquinoline quinone + 2 H2O2 + 2 H2O + H(+). It functions in the pathway cofactor biosynthesis; pyrroloquinoline quinone biosynthesis. Ring cyclization and eight-electron oxidation of 3a-(2-amino-2-carboxyethyl)-4,5-dioxo-4,5,6,7,8,9-hexahydroquinoline-7,9-dicarboxylic-acid to PQQ. This is Pyrroloquinoline-quinone synthase from Ectopseudomonas mendocina (strain ymp) (Pseudomonas mendocina).